The chain runs to 513 residues: Histidine ammonia-lyase (513 aa).

The 5-imidazolinone (Ala-Gly) cross-link spans 142 to 144; sequence ASG. A 2,3-didehydroalanine (Ser) modification is found at S143.

The protein belongs to the PAL/histidase family. In terms of processing, contains an active site 4-methylidene-imidazol-5-one (MIO), which is formed autocatalytically by cyclization and dehydration of residues Ala-Ser-Gly.

The protein resides in the cytoplasm. The catalysed reaction is L-histidine = trans-urocanate + NH4(+). The protein operates within amino-acid degradation; L-histidine degradation into L-glutamate; N-formimidoyl-L-glutamate from L-histidine: step 1/3. This chain is Histidine ammonia-lyase, found in Mesorhizobium japonicum (strain LMG 29417 / CECT 9101 / MAFF 303099) (Mesorhizobium loti (strain MAFF 303099)).